Here is a 279-residue protein sequence, read N- to C-terminus: 4-diphosphocytidyl-2-C-methyl-D-erythritol kinase (279 aa).

The active site involves Lys11. 95–105 (PVAAGLGGGSS) lines the ATP pocket. The active site involves Asp137.

Belongs to the GHMP kinase family. IspE subfamily.

It carries out the reaction 4-CDP-2-C-methyl-D-erythritol + ATP = 4-CDP-2-C-methyl-D-erythritol 2-phosphate + ADP + H(+). The protein operates within isoprenoid biosynthesis; isopentenyl diphosphate biosynthesis via DXP pathway; isopentenyl diphosphate from 1-deoxy-D-xylulose 5-phosphate: step 3/6. Functionally, catalyzes the phosphorylation of the position 2 hydroxy group of 4-diphosphocytidyl-2C-methyl-D-erythritol. This chain is 4-diphosphocytidyl-2-C-methyl-D-erythritol kinase, found in Geobacter sulfurreducens (strain ATCC 51573 / DSM 12127 / PCA).